The sequence spans 348 residues: Protein RecA (348 aa).

65–72 (GPESSGKT) provides a ligand contact to ATP. Residues 326 to 336 (LLTPAEEKPET) show a composition bias toward basic and acidic residues. A disordered region spans residues 326–348 (LLTPAEEKPETDAAPEIEENEEF). The segment covering 338–348 (AAPEIEENEEF) has biased composition (acidic residues).

Belongs to the RecA family.

The protein localises to the cytoplasm. Can catalyze the hydrolysis of ATP in the presence of single-stranded DNA, the ATP-dependent uptake of single-stranded DNA by duplex DNA, and the ATP-dependent hybridization of homologous single-stranded DNAs. It interacts with LexA causing its activation and leading to its autocatalytic cleavage. The sequence is that of Protein RecA from Aliivibrio fischeri (strain ATCC 700601 / ES114) (Vibrio fischeri).